A 307-amino-acid polypeptide reads, in one-letter code: Porphobilinogen deaminase (307 aa).

S-(dipyrrolylmethanemethyl)cysteine is present on Cys-239.

This sequence belongs to the HMBS family. Monomer. The cofactor is dipyrromethane.

It catalyses the reaction 4 porphobilinogen + H2O = hydroxymethylbilane + 4 NH4(+). The protein operates within porphyrin-containing compound metabolism; protoporphyrin-IX biosynthesis; coproporphyrinogen-III from 5-aminolevulinate: step 2/4. Its function is as follows. Tetrapolymerization of the monopyrrole PBG into the hydroxymethylbilane pre-uroporphyrinogen in several discrete steps. This is Porphobilinogen deaminase from Campylobacter jejuni subsp. jejuni serotype O:23/36 (strain 81-176).